Here is a 241-residue protein sequence, read N- to C-terminus: MMQTGTIHNRDKFLQTVANRLGRHQRTSGVSRPHWRHQPQWTVFQGYSQDELLEALKAQCPRIHTQCVETTAVELKETLKEVVAKHGGGPIVTWDDPRFDEYGLTRLLRNEWPNENVDVHIWDASAGRKNIDYAEQANVGITFSDITLAESGTVVLFSGNGKGRTVSFLPKTYIAIIAKSTIVPRMTQAAAYIHEQIEKGHLIPSCINFITGPSNSADIEMNLVVGVHGPMKATYIVVTDR.

Belongs to the LutC/YkgG family.

Is involved in L-lactate degradation and allows cells to grow with lactate as the sole carbon source. The chain is Lactate utilization protein C from Geobacillus sp. (strain WCH70).